Consider the following 90-residue polypeptide: DNA-directed RNA polymerase subunit omega (90 aa).

A disordered region spans residues 70–90 (QEQQEQEAAELAAVSSIMHNR).

The protein belongs to the RNA polymerase subunit omega family. As to quaternary structure, the RNAP catalytic core consists of 2 alpha, 1 beta, 1 beta' and 1 omega subunit. When a sigma factor is associated with the core the holoenzyme is formed, which can initiate transcription.

It carries out the reaction RNA(n) + a ribonucleoside 5'-triphosphate = RNA(n+1) + diphosphate. Functionally, promotes RNA polymerase assembly. Latches the N- and C-terminal regions of the beta' subunit thereby facilitating its interaction with the beta and alpha subunits. The chain is DNA-directed RNA polymerase subunit omega from Vibrio cholerae serotype O1 (strain ATCC 39541 / Classical Ogawa 395 / O395).